Here is a 329-residue protein sequence, read N- to C-terminus: Sex comb on midleg-like protein 1 (329 aa).

A disordered region spans residues 136–160; the sequence is SYSPTLPVSRRENNSPSNLPRPSFC. A phosphoserine mark is found at Ser-138 and Ser-238. The 68-residue stretch at 258–325 folds into the SAM domain; sequence WSVEAVVLFL…YYIDRLKQGK (68 aa).

This sequence belongs to the SCM family.

Its subcellular location is the nucleus. Functionally, putative Polycomb group (PcG) protein. PcG proteins act by forming multiprotein complexes, which are required to maintain the transcriptionally repressive state of homeotic genes throughout development. May be involved in spermatogenesis during sexual maturation. The sequence is that of Sex comb on midleg-like protein 1 (SCML1) from Pongo pygmaeus (Bornean orangutan).